The sequence spans 352 residues: Probable cytosolic iron-sulfur protein assembly protein CIAO1 homolog (352 aa).

WD repeat units follow at residues 12-51 (ASNK…LWGS), 58-97 (AHKK…SAPE), 106-145 (GHTS…DVQC), 151-190 (PHSQ…WTVF), 195-234 (GHDS…GKSS), 245-284 (YHTR…LTHI), and 303-352 (AHSE…EYEL).

Belongs to the WD repeat CIA1 family.

Its function is as follows. Essential component of the cytosolic iron-sulfur (Fe/S) protein assembly machinery. Required for the maturation of extramitochondrial Fe/S proteins. The protein is Probable cytosolic iron-sulfur protein assembly protein CIAO1 homolog of Schistosoma japonicum (Blood fluke).